Reading from the N-terminus, the 323-residue chain is Beta-ketoacyl-[acyl-carrier-protein] synthase III (323 aa).

Residues cysteine 112 and histidine 248 contribute to the active site. The segment at 249 to 253 (QANRR) is ACP-binding. The active site involves asparagine 278.

This sequence belongs to the thiolase-like superfamily. FabH family. Homodimer.

It is found in the cytoplasm. It catalyses the reaction malonyl-[ACP] + acetyl-CoA + H(+) = 3-oxobutanoyl-[ACP] + CO2 + CoA. Its pathway is lipid metabolism; fatty acid biosynthesis. In terms of biological role, catalyzes the condensation reaction of fatty acid synthesis by the addition to an acyl acceptor of two carbons from malonyl-ACP. Catalyzes the first condensation reaction which initiates fatty acid synthesis and may therefore play a role in governing the total rate of fatty acid production. Possesses both acetoacetyl-ACP synthase and acetyl transacylase activities. Its substrate specificity determines the biosynthesis of branched-chain and/or straight-chain of fatty acids. The chain is Beta-ketoacyl-[acyl-carrier-protein] synthase III from Streptococcus agalactiae serotype Ia (strain ATCC 27591 / A909 / CDC SS700).